Reading from the N-terminus, the 1060-residue chain is Centrosomal protein of 131 kDa (1060 aa).

Residues 1–11 show a composition bias toward polar residues; sequence MKGSRTITATP. Positions 1 to 96 are disordered; sequence MKGSRTITAT…TGSPRPAEPT (96 aa). The interval 1 to 244 is interaction with PLK4; it reads MKGSRTITAT…SQSARGTTGL (244 aa). Residues S14 and S35 each carry the phosphoserine modification. Composition is skewed to polar residues over residues 32-50 and 73-88; these read RPGS…SVAT and LRRS…SWTG. S47 carries the post-translational modification Phosphoserine; by MAPKAPK2. S78 is modified (phosphoserine; by MAPKAPK2 and PLK4). Phosphoserine is present on residues S89, S105, S114, S146, and S150. Disordered regions lie at residues 136–155 and 217–248; these read LALP…LGPR and EGGE…LRRR. Basic and acidic residues predominate over residues 217–226; that stretch reads EGGEGSDLGK. One can recognise an IQ domain in the interval 263-283; that stretch reads NQAAVTIQRWYRCQVQRRRAG. 2 stretches are compositionally biased toward basic and acidic residues: residues 314–327 and 344–363; these read EEAA…EKAR and KASE…RAPE. A disordered region spans residues 314-437; sequence EEAARKKARE…VSGSSRGKAR (124 aa). The span at 398–408 shows a compositional bias: low complexity; sequence ASESSPEQWQS. Residues 409-424 show a composition bias toward basic and acidic residues; it reads PEDKPQDIHSQGEARQ. T473 is modified (phosphothreonine). The residue at position 481 (S481) is a Phosphoserine.

It belongs to the CEP131 family. In terms of assembly, self-associates. Associates with the centriolar satellite BBSome protein complex Interacts with BBS4; the interaction limits BBS4 availability for association with the BBSome complex, and hence negatively regulates ciliary localization of the BBSome complex. Interacts with MIB1. Interacts with PCM1; the interaction increases in response to ultraviolet light (UV) radiation. Associates with microtubule; association to microtubule is reduced in response to cellular stress, such as UV stimulation, in a process that requires p38 MAP kinase signaling. Interacts with CEP290, DCTN1, MAP1LC3B, PCNT, PCM1 and CEP152. Interacts with 14-3-3 proteins following UV-induced phosphorylation by MAPKAPK2; this inhibits formation of novel centriolar satellites. Interacts with SDCCAG8. Interacts with CCDC61. Interacts with PLK4. Ubiquitinated. Undergoes monoubiquitination catalyzed by the E3 ubiquitin-protein ligase MIB1 in proliferating cells, preventing cilia formation. Monoubiquitination by MIB1 is inhibited in response to cellular stress, such as ultraviolet light (UV) radiation or heat shock, resulting in ciliogenesis restoration. In terms of processing, MAPKAPK2-dependent phosphorylation at Ser-47 and Ser-78 occurs in response to cellular stress such as exposure to ultraviolet irradiation and promotes binding to 14-3-3 proteins which leads to cytoplasmic sequestration of CEP131 and blocks formation of new centriolar satellites. Phosphorylation at Ser-78 mediated by PLK4 is essential for proper organization and integrity of centriolar satellites but is dispensable for its localization to centrioles and its function in ciliogenesis. As to expression, localized to the pre-acrosome region of round and elongated spermatids in testis but also present in ovary, brain and adipose tissue.

The protein localises to the cytoplasm. The protein resides in the cytoskeleton. It localises to the microtubule organizing center. Its subcellular location is the centrosome. It is found in the centriolar satellite. The protein localises to the centriole. The protein resides in the cilium basal body. It localises to the cytoplasmic vesicle. Its subcellular location is the secretory vesicle. It is found in the acrosome. Component of centriolar satellites contributing to the building of a complex and dynamic network required to regulate cilia/flagellum formation. In proliferating cells, MIB1-mediated ubiquitination induces its sequestration within centriolar satellites, precluding untimely cilia formation initiation. In contrast, during normal and ultraviolet or heat shock cellular stress-induced ciliogenesis, its non-ubiquitinated form is rapidly displaced from centriolar satellites and recruited to centrosome/basal bodies in a microtubule- and p38 MAPK-dependent manner. Also acts as a negative regulator of BBSome ciliary trafficking. Plays a role in sperm flagellar formation; may be involved in the regulation of intraflagellar transport (IFT) and/or intramanchette (IMT) trafficking, which are important for axoneme extension and/or cargo delivery to the nascent sperm tail. Required for optimal cell proliferation and cell cycle progression; may play a role in the regulation of genome stability and centriole duplication in non-ciliogenic cells. Involved in centriole duplication. Required for CEP152, WDR62 and CEP63 centrosomal localization and promotes the centrosomal localization of CDK2. Essential for maintaining proper centriolar satellite integrity. This Mus musculus (Mouse) protein is Centrosomal protein of 131 kDa (Cep131).